Here is a 263-residue protein sequence, read N- to C-terminus: Putative ankyrin repeat domain-containing protein 20A12 pseudogene (263 aa).

Coiled coils occupy residues 65–121 (KKDL…MLES) and 171–263 (NQVF…IQLH).

The sequence is that of Putative ankyrin repeat domain-containing protein 20A12 pseudogene from Homo sapiens (Human).